Here is a 65-residue protein sequence, read N- to C-terminus: Large ribosomal subunit protein bL35 (65 aa).

Belongs to the bacterial ribosomal protein bL35 family.

This is Large ribosomal subunit protein bL35 from Parabacteroides distasonis (strain ATCC 8503 / DSM 20701 / CIP 104284 / JCM 5825 / NCTC 11152).